The chain runs to 167 residues: Large ribosomal subunit protein uL10 (167 aa).

This sequence belongs to the universal ribosomal protein uL10 family. Part of the ribosomal stalk of the 50S ribosomal subunit. The N-terminus interacts with L11 and the large rRNA to form the base of the stalk. The C-terminus forms an elongated spine to which L12 dimers bind in a sequential fashion forming a multimeric L10(L12)X complex.

Its function is as follows. Forms part of the ribosomal stalk, playing a central role in the interaction of the ribosome with GTP-bound translation factors. The polypeptide is Large ribosomal subunit protein uL10 (Latilactobacillus sakei subsp. sakei (strain 23K) (Lactobacillus sakei subsp. sakei)).